We begin with the raw amino-acid sequence, 341 residues long: Protein pelota homolog (341 aa).

This sequence belongs to the eukaryotic release factor 1 family. Pelota subfamily. Monomer. A divalent metal cation serves as cofactor.

The protein resides in the cytoplasm. In terms of biological role, may function in recognizing stalled ribosomes, interact with stem-loop structures in stalled mRNA molecules, and effect endonucleolytic cleavage of the mRNA. May play a role in the release non-functional ribosomes and degradation of damaged mRNAs. Has endoribonuclease activity. The chain is Protein pelota homolog from Methanoregula boonei (strain DSM 21154 / JCM 14090 / 6A8).